The chain runs to 403 residues: Tyrosine--tRNA ligase (403 aa).

A 'HIGH' region motif is present at residues 42-51 (PTAPDLHLGH). The 'KMSKS' region signature appears at 226 to 230 (KMSKS). Lys-229 provides a ligand contact to ATP. In terms of domain architecture, S4 RNA-binding spans 339–400 (LRIASLLTAA…GKRNFARVAL (62 aa)).

It belongs to the class-I aminoacyl-tRNA synthetase family. TyrS type 2 subfamily. As to quaternary structure, homodimer.

It localises to the cytoplasm. The enzyme catalyses tRNA(Tyr) + L-tyrosine + ATP = L-tyrosyl-tRNA(Tyr) + AMP + diphosphate + H(+). Catalyzes the attachment of tyrosine to tRNA(Tyr) in a two-step reaction: tyrosine is first activated by ATP to form Tyr-AMP and then transferred to the acceptor end of tRNA(Tyr). The chain is Tyrosine--tRNA ligase from Xanthomonas campestris pv. campestris (strain ATCC 33913 / DSM 3586 / NCPPB 528 / LMG 568 / P 25).